Consider the following 509-residue polypeptide: Coiled-coil domain-containing protein 181 (509 aa).

A compositionally biased stretch (basic and acidic residues) spans 60–82 (EHTKQHSDPDKSLQDDVSPRRND). 2 disordered regions span residues 60–121 (EHTK…EEDE) and 285–367 (GEPL…EEKE). Polar residues predominate over residues 320 to 334 (RTQSARISPVTSTYC). The stretch at 335 to 375 (LSPRQKELQKQLEQKREKLKREEEQRKIEEEKEKKRENDIV) forms a coiled coil. Over residues 338–367 (RQKELQKQLEQKREKLKREEEQRKIEEEKE) the composition is skewed to basic and acidic residues.

It belongs to the CCDC181 family. Homodimer. Interacts with HOOK1. Interacts with HOOK2. Interacts with HOOK3.

It is found in the cytoplasm. The protein localises to the cytoskeleton. Its subcellular location is the cell projection. The protein resides in the cilium. It localises to the flagellum. Its function is as follows. Microtubule-binding protein that localizes to the microtubular manchette of elongating spermatids. The chain is Coiled-coil domain-containing protein 181 from Macaca fascicularis (Crab-eating macaque).